We begin with the raw amino-acid sequence, 143 residues long: Nucleoside diphosphate kinase (143 aa).

ATP contacts are provided by lysine 11, phenylalanine 59, arginine 87, threonine 93, arginine 104, and asparagine 114. Histidine 117 functions as the Pros-phosphohistidine intermediate in the catalytic mechanism.

This sequence belongs to the NDK family. In terms of assembly, homotetramer. The cofactor is Mg(2+).

The protein localises to the cytoplasm. It carries out the reaction a 2'-deoxyribonucleoside 5'-diphosphate + ATP = a 2'-deoxyribonucleoside 5'-triphosphate + ADP. The enzyme catalyses a ribonucleoside 5'-diphosphate + ATP = a ribonucleoside 5'-triphosphate + ADP. Functionally, major role in the synthesis of nucleoside triphosphates other than ATP. The ATP gamma phosphate is transferred to the NDP beta phosphate via a ping-pong mechanism, using a phosphorylated active-site intermediate. The polypeptide is Nucleoside diphosphate kinase (Pseudoalteromonas translucida (strain TAC 125)).